The primary structure comprises 183 residues: Inosine/xanthosine triphosphatase (183 aa).

Mg(2+) is bound at residue aspartate 75. Substrate is bound at residue 75 to 76; sequence DG.

It belongs to the YjjX NTPase family. Homodimer. It depends on Mg(2+) as a cofactor. Requires Mn(2+) as cofactor.

It carries out the reaction XTP + H2O = XDP + phosphate + H(+). The catalysed reaction is ITP + H2O = IDP + phosphate + H(+). Phosphatase that hydrolyzes non-canonical purine nucleotides such as XTP and ITP to their respective diphosphate derivatives. Probably excludes non-canonical purines from DNA/RNA precursor pool, thus preventing their incorporation into DNA/RNA and avoiding chromosomal lesions. The sequence is that of Inosine/xanthosine triphosphatase from Vibrio vulnificus (strain CMCP6).